Reading from the N-terminus, the 295-residue chain is sn-glycerol-3-phosphate transport system permease protein UgpA (295 aa).

Topologically, residues 1–11 (MSSSRPVFRSR) are cytoplasmic. A helical transmembrane segment spans residues 12-32 (WLPYLLVAPQLVITVIFFIWP). Topologically, residues 33–80 (AGEALWYSLQSVDPFGFSSQFVGLENFVALFHDSYYLDAFWTTIKFSA) are periplasmic. Positions 76-284 (IKFSALVTFS…FLVIILTVVQ (209 aa)) constitute an ABC transmembrane type-1 domain. The chain crosses the membrane as a helical span at residues 81–101 (LVTFSGLLVSLFFAALVDYVV). Over 102-109 (RGSRFYQT) the chain is Cytoplasmic. Residues 110–130 (LMLLPYAVAPAVAAVLWIFLF) traverse the membrane as a helical segment. The Periplasmic portion of the chain corresponds to 131–157 (NPGRGLITHFLGEFGYDWNHAQNSGQA). The helical transmembrane segment at 158–178 (MFLVVFASVWKQISYNFLFFF) threads the bilayer. Over 179-207 (AALQSIPRSLVEAAAIDGAGPIRRFFRLS) the chain is Cytoplasmic. The helical transmembrane segment at 208-228 (LPLIAPVSFFLLVVNLVYAFF) threads the bilayer. The Periplasmic portion of the chain corresponds to 229–262 (DTFPVIDAATAGGPVQATTTLIYKIYREGFTGLD). A helical transmembrane segment spans residues 263-283 (LSASAAQSVVLMFLVIILTVV). At 284–295 (QFRYVESKVRYQ) the chain is on the cytoplasmic side.

This sequence belongs to the binding-protein-dependent transport system permease family. UgpAE subfamily. In terms of assembly, the complex is composed of two ATP-binding proteins (UgpC), two transmembrane proteins (UgpA and UgpE) and a solute-binding protein (UgpB).

The protein localises to the cell inner membrane. In terms of biological role, part of the ABC transporter complex UgpBAEC involved in sn-glycerol-3-phosphate (G3P) import. Probably responsible for the translocation of the substrate across the membrane. The protein is sn-glycerol-3-phosphate transport system permease protein UgpA (ugpA) of Salmonella typhimurium (strain LT2 / SGSC1412 / ATCC 700720).